Consider the following 392-residue polypeptide: Iripin-4 (392 aa).

The N-terminal stretch at 1 to 16 is a signal peptide; sequence MRSLATFMSLLTICWG. 3 N-linked (GlcNAc...) asparagine glycosylation sites follow: Asn104, Asn130, and Asn265.

Belongs to the serpin family. As to expression, female salivary gland.

Its subcellular location is the secreted. Functionally, serpin with unknown function. Weakly inhibits human granzyme B (GZMB). Acts as a substrate for porcine elastase. This is Iripin-4 from Ixodes ricinus (Common tick).